Here is a 285-residue protein sequence, read N- to C-terminus: Putative lipoprotein SCO4650 (285 aa).

Residues 1–20 (MTGTTARRTVVSVAVSAALA) form the signal peptide. C21 is lipidated: N-palmitoyl cysteine. C21 carries the S-diacylglycerol cysteine lipid modification. Positions 27–63 (GPGGSDDAGHSTGPTGSARPSASAPASSRAPALTGPS) are disordered. Over residues 43–58 (SARPSASAPASSRAPA) the composition is skewed to low complexity.

It is found in the cell membrane. The chain is Putative lipoprotein SCO4650 from Streptomyces coelicolor (strain ATCC BAA-471 / A3(2) / M145).